Reading from the N-terminus, the 322-residue chain is uncharacterized protein (322 aa).

Residues 1-32 (MRDGIGKRAASALFLCGVLVMLAVSSAIVSSA) form the signal peptide.

This is an uncharacterized protein from Bacillus subtilis (strain 168).